A 117-amino-acid polypeptide reads, in one-letter code: Ig heavy chain V region 3 (117 aa).

The N-terminal stretch at 1–19 is a signal peptide; that stretch reads MGWSCIILFLVATATGVHS. The framework-1 stretch occupies residues 20 to 49; sequence QVQLQQPGAELVRPGSSVKLSCKASGYTFT. Cysteines 41 and 115 form a disulfide. The segment at 50-54 is complementarity-determining-1; it reads SYWMD. The interval 55–68 is framework-2; sequence WVKQRPGQGLEWIG. Residues 69–85 are complementarity-determining-2; that stretch reads NIYPSDSETHYNQKFKD. The interval 86-117 is framework-3; the sequence is KATLTVDKSSSTAYMQLSSLTSEDSAVYYCAR.

This Mus musculus (Mouse) protein is Ig heavy chain V region 3 (Ighv1-61).